Consider the following 366-residue polypeptide: Peptide chain release factor 1 (366 aa).

Q239 carries the N5-methylglutamine modification.

This sequence belongs to the prokaryotic/mitochondrial release factor family. In terms of processing, methylated by PrmC. Methylation increases the termination efficiency of RF1.

It localises to the cytoplasm. Its function is as follows. Peptide chain release factor 1 directs the termination of translation in response to the peptide chain termination codons UAG and UAA. The sequence is that of Peptide chain release factor 1 from Albidiferax ferrireducens (strain ATCC BAA-621 / DSM 15236 / T118) (Rhodoferax ferrireducens).